Consider the following 119-residue polypeptide: Flagellar transcriptional regulator FlhD (119 aa).

This sequence belongs to the FlhD family. Homodimer; disulfide-linked. Forms a heterohexamer composed of two FlhC and four FlhD subunits. Each FlhC binds a FlhD dimer, forming a heterotrimer, and a hexamer assembles by dimerization of two heterotrimers.

The protein localises to the cytoplasm. In terms of biological role, functions in complex with FlhC as a master transcriptional regulator that regulates transcription of several flagellar and non-flagellar operons by binding to their promoter region. Activates expression of class 2 flagellar genes, including fliA, which is a flagellum-specific sigma factor that turns on the class 3 genes. Also regulates genes whose products function in a variety of physiological pathways. This is Flagellar transcriptional regulator FlhD from Shigella boydii serotype 4 (strain Sb227).